Consider the following 294-residue polypeptide: N-acetylmuramic acid 6-phosphate etherase (294 aa).

Residues 54 to 217 (TIHSFKSNGR…STASMIGVGK (164 aa)) enclose the SIS domain. The active-site Proton donor is the E82. Residue E113 is part of the active site.

This sequence belongs to the GCKR-like family. MurNAc-6-P etherase subfamily. As to quaternary structure, homodimer.

It carries out the reaction N-acetyl-D-muramate 6-phosphate + H2O = N-acetyl-D-glucosamine 6-phosphate + (R)-lactate. The protein operates within amino-sugar metabolism; N-acetylmuramate degradation. Its function is as follows. Specifically catalyzes the cleavage of the D-lactyl ether substituent of MurNAc 6-phosphate, producing GlcNAc 6-phosphate and D-lactate. This Oceanobacillus iheyensis (strain DSM 14371 / CIP 107618 / JCM 11309 / KCTC 3954 / HTE831) protein is N-acetylmuramic acid 6-phosphate etherase.